The primary structure comprises 25 residues: Growth-blocking peptide (25 aa).

Residues Cys7 and Cys19 are joined by a disulfide bond. Residue Gln25 is modified to Glutamine amide.

It belongs to the GBP/PSP1/paralytic peptide family. In terms of tissue distribution, hemolymph.

In terms of biological role, biogenic peptide that prevents, in lepidopteran, the onset of metamorphosis from larva to pupa. This growth-blocking peptide has repressive activity against juvenile hormone esterase. The protein is Growth-blocking peptide of Cotesia kariyai (Parasitic wasp).